We begin with the raw amino-acid sequence, 139 residues long: NADPH-dependent 7-cyano-7-deazaguanine reductase (139 aa).

The active-site Thioimide intermediate is the Cys34. The active-site Proton donor is Asp41. Residues 56–58 (VEL) and 75–76 (HE) contribute to the substrate site.

It belongs to the GTP cyclohydrolase I family. QueF type 1 subfamily.

It localises to the cytoplasm. The enzyme catalyses 7-aminomethyl-7-carbaguanine + 2 NADP(+) = 7-cyano-7-deazaguanine + 2 NADPH + 3 H(+). It participates in tRNA modification; tRNA-queuosine biosynthesis. Catalyzes the NADPH-dependent reduction of 7-cyano-7-deazaguanine (preQ0) to 7-aminomethyl-7-deazaguanine (preQ1). This chain is NADPH-dependent 7-cyano-7-deazaguanine reductase, found in Nitrosospira multiformis (strain ATCC 25196 / NCIMB 11849 / C 71).